Consider the following 1013-residue polypeptide: MSKKPPNRPGITFEIGARLEALDYLQKWYPSRIEKIDYEEGKMLVHFERWSHRYDEWIYWDSNRLRPLERPALRKEGLKDEEELFDFKAGEEVLARWTDCRYYPAKIEAINKEGTFTVQFYDGVIRCLKRMHIKAMPEDAKGQVKSQHPLSWCCPIDPAGSCNQSMGSEDWIALVKAAAAAAAKNKTGTKPRASANSNKEKERDGGKWFKLPSKKAETSTCIVTAEIEKKEELPTSSETFGLHIDTVPKIVFPQPESTLTNKRKNNQGNSFQAKRARLNKITGLLASKAVGVDGAERKEDCSATAPVLEQAISPKPQSQKKNEAVISSSANTQKPALLSSTLSSGKARSKKCKHESGESSGCIKTPKSPLAPELIQAKDLTLVSQLSSVINKTSSPQPVNPPRPCKHSERRRRSQRLATLPMPDDSLEKLSSSSSATDGKAFSISSQNQQQSSVPEVPAIAYVPLQKLGPCLPLDLSCGSEVTGSRTPHPSYHGGECPREEKEETPLFANPTSKVVSDVKGAAAATGISKTEKKVKLEEKTSTAFGKRKEKDKEKKEKRDKDHYKPKQKKKKKKKKKSKQHDYSDYEDSSLDFLERCSSPLTRSSGSSLAPRSTFTEKTTTYQYPRAILSVDLSGENLSDVEFLDDSSTESLLLSGDEYNQDFDSTNFEESQDEDDALNEIVRCICELDEENGFMIQCEECLCWQHSVCMGLLEDSIPEQYICYICRDPPGQRWSAKYRYDKEWLNNGRMYGLSFLKENYSHLNAKKIVSTHHLLADVYGVTEVLHGLQLKIGILKNKHHPDLHLWAYSGKRKDQDQAVAEAERKITPQDRANSEGKECVQNHKEPALRMEETYITSEHSYQKPQSFSQDCQSLTDPGSSDDDDASSFEEDGELRVPDKSHLLYKNRGVSEKNPASGNKVFVYNDKKGTEGPGDSHLQWQLNLLTHIENVQNEVTSRMDLIEKEVDVLESWLDFTGELEPPDPLARLPQLKRHLKQLLLDVGKVQQIATLCSV.

The Tudor 1 domain occupies 11 to 71 (ITFEIGARLE…SNRLRPLERP (61 aa)). Glycyl lysine isopeptide (Lys-Gly) (interchain with G-Cter in SUMO2) cross-links involve residues K75 and K79. Positions 85 to 141 (FDFKAGEEVLARWTDCRYYPAKIEAINKEGTFTVQFYDGVIRCLKRMHIKAMPEDAK) constitute a Tudor 2 domain. Disordered regions lie at residues 183–206 (AKNKTGTKPRASANSNKEKERDGG), 309–368 (EQAI…TPKS), 389–454 (VINK…QSSV), and 482–511 (VTGSRTPHPSYHGGECPREEKEETPLFANP). Positions 315–346 (KPQSQKKNEAVISSSANTQKPALLSSTLSSGK) are enriched in polar residues. S368 carries the post-translational modification Phosphoserine. The span at 404 to 415 (PCKHSERRRRSQ) shows a compositional bias: basic residues. Phosphoserine is present on S432. The segment covering 443–453 (SISSQNQQQSS) has biased composition (low complexity). Positions 496–505 (ECPREEKEET) are enriched in basic and acidic residues. K530 is covalently cross-linked (Glycyl lysine isopeptide (Lys-Gly) (interchain with G-Cter in SUMO2)). Over residues 533–565 (KKVKLEEKTSTAFGKRKEKDKEKKEKRDKDHYK) the composition is skewed to basic and acidic residues. Residues 533–585 (KKVKLEEKTSTAFGKRKEKDKEKKEKRDKDHYKPKQKKKKKKKKKSKQHDYSD) form a disordered region. Basic residues predominate over residues 566–579 (PKQKKKKKKKKKSK). Residues 681–729 (IVRCICELDEENGFMIQCEECLCWQHSVCMGLLEDSIPEQYICYICRDP) form a PHD-type zinc finger. Residues 824–852 (RKITPQDRANSEGKECVQNHKEPALRMEE) are compositionally biased toward basic and acidic residues. Positions 824–911 (RKITPQDRAN…LLYKNRGVSE (88 aa)) are disordered. The segment covering 854-878 (YITSEHSYQKPQSFSQDCQSLTDPG) has biased composition (polar residues). Residues 879 to 892 (SSDDDDASSFEEDG) are compositionally biased toward acidic residues. Residue K905 is modified to N6-acetyllysine.

In terms of assembly, interacts with methylated DNMT1 (DNMT1K142me1). Interacts with SOX2.

The protein resides in the nucleus. Functionally, is a negative regulator of proteasomal degradation of a set of methylated proteins, including DNMT1 and SOX2. Involved in the maintainance of embryonic stem cells pluripotency, through the regulation of SOX2 levels. In Mus musculus (Mouse), this protein is PHD finger protein 20-like protein 1 (Phf20l1).